The primary structure comprises 270 residues: MLVVEGLTCRFGSKAAVDGASFSVERGSFVGVIGRSGAGKSTLLRMLNRLAEPSEGRILFEGIDVTALQGRELRQWRARSAMIFQQFNLIGRLDVLTNVLMGRLSEVPSWRSLVQMWPEQDRALAISALDQFDMASYAAQRADQLSGGQQQRVAIARALVQQPDIVLADEPIASLDPRNTKIVMDALLRINKHFGITVLCNLHSLDLARSYCDRLIGMASGRVVFDGAPAALTDQIARELYDLEADEVLGTASHVPHGLPAPALAGVAVA.

Residues 2 to 245 (LVVEGLTCRF…IARELYDLEA (244 aa)) form the ABC transporter domain. 34–41 (GRSGAGKS) is a binding site for ATP.

The protein belongs to the ABC transporter superfamily. Phosphonates importer (TC 3.A.1.9.1) family. In terms of assembly, the complex is composed of two ATP-binding proteins (PhnC), two transmembrane proteins (PhnE) and a solute-binding protein (PhnD).

It is found in the cell inner membrane. It catalyses the reaction phosphonate(out) + ATP + H2O = phosphonate(in) + ADP + phosphate + H(+). Its function is as follows. Part of the ABC transporter complex PhnCDE involved in phosphonates import. Responsible for energy coupling to the transport system. In Rhodopseudomonas palustris (strain ATCC BAA-98 / CGA009), this protein is Phosphonates import ATP-binding protein PhnC 1.